A 233-amino-acid polypeptide reads, in one-letter code: Large ribosomal subunit protein uL1 (233 aa).

This sequence belongs to the universal ribosomal protein uL1 family. Part of the 50S ribosomal subunit.

Its function is as follows. Binds directly to 23S rRNA. The L1 stalk is quite mobile in the ribosome, and is involved in E site tRNA release. In terms of biological role, protein L1 is also a translational repressor protein, it controls the translation of the L11 operon by binding to its mRNA. In Rhizobium etli (strain CIAT 652), this protein is Large ribosomal subunit protein uL1.